The chain runs to 140 residues: Small ribosomal subunit protein uS12m (140 aa).

A mitochondrion-targeting transit peptide spans 1–30 (MNFLRQSFGITKQLASQAIQCSYETAVRGM).

The protein belongs to the universal ribosomal protein uS12 family.

The protein localises to the mitochondrion. This Drosophila melanogaster (Fruit fly) protein is Small ribosomal subunit protein uS12m (tko).